The chain runs to 360 residues: Glycerol-1-phosphate dehydrogenase [NAD(P)+] (360 aa).

NAD(+) is bound by residues 108–112 (GRVID) and 130–133 (TAAS). Asp135 contacts substrate. Residue Ser139 participates in NAD(+) binding. Substrate is bound at residue Asp182. 2 residues coordinate Zn(2+): Asp182 and His262. His266 serves as a coordination point for substrate. His278 lines the Zn(2+) pocket.

The protein belongs to the glycerol-1-phosphate dehydrogenase family. Zn(2+) serves as cofactor.

The protein resides in the cytoplasm. The catalysed reaction is sn-glycerol 1-phosphate + NAD(+) = dihydroxyacetone phosphate + NADH + H(+). The enzyme catalyses sn-glycerol 1-phosphate + NADP(+) = dihydroxyacetone phosphate + NADPH + H(+). Its pathway is membrane lipid metabolism; glycerophospholipid metabolism. Its function is as follows. Catalyzes the NAD(P)H-dependent reduction of dihydroxyacetonephosphate (DHAP or glycerone phosphate) to glycerol 1-phosphate (G1P). The G1P thus generated is used as the glycerophosphate backbone of phospholipids in the cellular membranes of Archaea. The sequence is that of Glycerol-1-phosphate dehydrogenase [NAD(P)+] from Methanoculleus marisnigri (strain ATCC 35101 / DSM 1498 / JR1).